The following is a 735-amino-acid chain: Transcription factor RFX4 (735 aa).

The segment at 27-59 (NKRYSSHTSLGNVSNDENEEKENNRASKPHSTP) is disordered. The span at 32–41 (SHTSLGNVSN) shows a compositional bias: polar residues. A DNA-binding region spans residues 44–126 (NEEKENNRAS…RRLGTRGQSK (83 aa)). Positions 61–136 (TLQWLEENYE…YHYYGIAVKE (76 aa)) form a DNA-binding region, RFX-type winged-helix. Positions 315 to 487 (RFSQILRRQT…NELMRAMKGE (173 aa)) are necessary for dimerization. The interval 501–538 (EATPPTPSPGPSFSPAKSATSVEVPPPSSPVSNPSPEY) is disordered.

This sequence belongs to the RFX family. As to quaternary structure, homodimer. Heterodimer with RFX2 and RFX3. Binds DNA. Interacts with GPS2. As to expression, isoform 1: Brain-specific. Isoform 2: Testis-specific. Isoform 1: Highly expressed in the suprachiasmatic nucleus, the central pacemaker site of the circadian clock (at protein level).

It localises to the nucleus. Transcription factor that plays a role in early brain development. May activate transcription by interacting directly with the X-box. May activate transcription from CX3CL1 promoter through the X-box during brain development. May be required for neural tube ciliogenesis during embryogenesis. This chain is Transcription factor RFX4 (Rfx4), found in Mus musculus (Mouse).